Reading from the N-terminus, the 393-residue chain is Prokineticin receptor 1 (393 aa).

Topologically, residues 1-62 (METTVGTLGE…TNSRTFFAAK (62 aa)) are extracellular. N-linked (GlcNAc...) asparagine glycosylation occurs at Asn-11. A helical membrane pass occupies residues 63–83 (IVIGMALVGIMLVCGIGNFIF). Residues 84–98 (ITALARYKKLRNLTN) are Cytoplasmic-facing. The helical transmembrane segment at 99 to 119 (LLIANLAISDFLVAIVCCPFE) threads the bilayer. Residues 120–145 (MDYYVVRQLSWEHGHVLCASVNYLRT) lie on the Extracellular side of the membrane. The cysteines at positions 137 and 217 are disulfide-linked. A helical transmembrane segment spans residues 146–166 (VSLYVSTNALLAIAIDRYLAI). Over 167–179 (VHPLRPRMKCQTA) the chain is Cytoplasmic. The helical transmembrane segment at 180-200 (AGLIFLVWSVSILIAIPAAYF) threads the bilayer. At 201–232 (TTETVLVIVESQEKIFCGQIWPVDQQFYYRSY) the chain is on the extracellular side. A helical transmembrane segment spans residues 233–253 (FLLVFGLEFVGPVIAMTLCYA). Residues 254-282 (RVSRELWFKAVPGFQTEQIRRRLRCRRRT) are Cytoplasmic-facing. The helical transmembrane segment at 283 to 303 (VLGLVCVLSAYVLCWAPFYGF) threads the bilayer. The Extracellular segment spans residues 304–322 (TIVRDFFPSVFVKEKHYLT). A helical transmembrane segment spans residues 323–343 (AFYVVECIAMSNSMINTLCFV). Over 344-393 (TVRNNTSKYLKRILRLQWRASPSGSKASADLDLRTTGIPATEEVDCIRLK) the chain is Cytoplasmic.

This sequence belongs to the G-protein coupled receptor 1 family. Widely expressed in peripheral tissues with the highest level in the spleen and moderate levels in the adipose tissues, thymus, lung, kidney, testis, uterus and small intestine.

It is found in the cell membrane. Receptor for prokineticin 1. Exclusively coupled to the G(q) subclass of heteromeric G proteins. Activation leads to mobilization of calcium, stimulation of phosphoinositide turnover and activation of p44/p42 mitogen-activated protein kinase. May play a role during early pregnancy. The chain is Prokineticin receptor 1 (Prokr1) from Rattus norvegicus (Rat).